Reading from the N-terminus, the 101-residue chain is Large ribosomal subunit protein uL23 (101 aa).

This sequence belongs to the universal ribosomal protein uL23 family. In terms of assembly, part of the 50S ribosomal subunit. Contacts protein L29, and trigger factor when it is bound to the ribosome.

Functionally, one of the early assembly proteins it binds 23S rRNA. One of the proteins that surrounds the polypeptide exit tunnel on the outside of the ribosome. Forms the main docking site for trigger factor binding to the ribosome. The polypeptide is Large ribosomal subunit protein uL23 (Pseudarthrobacter chlorophenolicus (strain ATCC 700700 / DSM 12829 / CIP 107037 / JCM 12360 / KCTC 9906 / NCIMB 13794 / A6) (Arthrobacter chlorophenolicus)).